The following is a 137-amino-acid chain: MLQPKRTKYRKQFKGRIKGVAKGGFDLAFGEFGLKSQEPNRVNAREIEAARRAITRYMKRAGRVWIRVFPDVPVTAKPTEVRMGKGKGSVEYWACKVKPGRMMFEIDGVTEEIAREALRLGAAKLSVKTRFVQRIAE.

It belongs to the universal ribosomal protein uL16 family. As to quaternary structure, part of the 50S ribosomal subunit.

In terms of biological role, binds 23S rRNA and is also seen to make contacts with the A and possibly P site tRNAs. This chain is Large ribosomal subunit protein uL16, found in Agrobacterium fabrum (strain C58 / ATCC 33970) (Agrobacterium tumefaciens (strain C58)).